The chain runs to 222 residues: Glutathione S-transferase alpha-4 (222 aa).

Methionine 1 carries the post-translational modification N-acetylmethionine. A GST N-terminal domain is found at valine 3–glycine 83. Glutathione contacts are provided by residues tyrosine 9, glutamine 54–valine 55, and glutamine 67–threonine 68. The region spanning aspartate 85–proline 208 is the GST C-terminal domain.

The protein belongs to the GST superfamily. Alpha family. As to quaternary structure, homodimer.

It is found in the cytoplasm. The enzyme catalyses RX + glutathione = an S-substituted glutathione + a halide anion + H(+). In terms of biological role, conjugation of reduced glutathione to a wide number of exogenous and endogenous hydrophobic electrophiles. The protein is Glutathione S-transferase alpha-4 (Gsta4) of Rattus norvegicus (Rat).